The sequence spans 510 residues: NAD(P)H-quinone oxidoreductase subunit 2 B, chloroplastic (510 aa).

13 consecutive transmembrane segments (helical) span residues 24–44 (LLLF…GLIL), 57–77 (IPWL…ALLF), 99–119 (IFQF…VEYI), 124–144 (MAIT…MFLC), 149–169 (LITI…LSGY), 183–203 (YLLM…WLYG), 227–247 (PGIS…LSPA), 295–315 (WHLL…LIAI), 323–343 (MLAY…IVGD), 354–374 (YMLF…SFGL), 392–412 (AFLA…PPLA), 418–438 (LHLF…IGLL), and 482–502 (LSMI…NPII).

The protein belongs to the complex I subunit 2 family. In terms of assembly, NDH is composed of at least 16 different subunits, 5 of which are encoded in the nucleus.

It localises to the plastid. The protein localises to the chloroplast thylakoid membrane. It catalyses the reaction a plastoquinone + NADH + (n+1) H(+)(in) = a plastoquinol + NAD(+) + n H(+)(out). The catalysed reaction is a plastoquinone + NADPH + (n+1) H(+)(in) = a plastoquinol + NADP(+) + n H(+)(out). In terms of biological role, NDH shuttles electrons from NAD(P)H:plastoquinone, via FMN and iron-sulfur (Fe-S) centers, to quinones in the photosynthetic chain and possibly in a chloroplast respiratory chain. The immediate electron acceptor for the enzyme in this species is believed to be plastoquinone. Couples the redox reaction to proton translocation, and thus conserves the redox energy in a proton gradient. The protein is NAD(P)H-quinone oxidoreductase subunit 2 B, chloroplastic of Morus indica (Mulberry).